A 175-amino-acid polypeptide reads, in one-letter code: Large ribosomal subunit protein uL10 (175 aa).

This sequence belongs to the universal ribosomal protein uL10 family. As to quaternary structure, part of the ribosomal stalk of the 50S ribosomal subunit. The N-terminus interacts with L11 and the large rRNA to form the base of the stalk. The C-terminus forms an elongated spine to which L12 dimers bind in a sequential fashion forming a multimeric L10(L12)X complex.

In terms of biological role, forms part of the ribosomal stalk, playing a central role in the interaction of the ribosome with GTP-bound translation factors. This Synechococcus sp. (strain CC9605) protein is Large ribosomal subunit protein uL10.